A 360-amino-acid polypeptide reads, in one-letter code: Peptide chain release factor 1 (360 aa).

Position 236 is an N5-methylglutamine (Gln-236).

Belongs to the prokaryotic/mitochondrial release factor family. Post-translationally, methylated by PrmC. Methylation increases the termination efficiency of RF1.

The protein localises to the cytoplasm. Functionally, peptide chain release factor 1 directs the termination of translation in response to the peptide chain termination codons UAG and UAA. The polypeptide is Peptide chain release factor 1 (Ligilactobacillus salivarius (strain UCC118) (Lactobacillus salivarius)).